The following is a 1669-amino-acid chain: Collagen alpha-3(IV) chain (1669 aa).

The first 28 residues, 1–28, serve as a signal peptide directing secretion; sequence MHSKTAPRFLVFLLLTLLLLLAASPVAS. The 7S domain stretch occupies residues 29–42; that stretch reads KGCVCKGKGQCLCA. Positions 43–1436 are triple-helical region; it reads GTKGEKGEKG…KGNPGDRGTP (1394 aa). Disordered regions lie at residues 44–473 and 500–1439; these read TKGE…EPGS and PGGR…PATG. Residues 54–68 are compositionally biased toward low complexity; sequence PGSPGFPGQKGFPGP. The segment covering 105–114 has biased composition (pro residues); the sequence is PGLPGLPGHP. N-linked (GlcNAc...) asparagine glycosylation is present at Asn126. A compositionally biased stretch (pro residues) spans 188–200; it reads PGFPGPAGPPGPP. Positions 202–211 are enriched in low complexity; it reads FFGLPGAMGP. Residue Asn253 is glycosylated (N-linked (GlcNAc...) asparagine). Basic and acidic residues predominate over residues 255–269; the sequence is SDFKGEKGDEGERGE. Composition is skewed to low complexity over residues 279–290 and 382–393; these read PGDSYGSEKGAP and SPGLSRPGLRGP. Over residues 416–437 the composition is skewed to pro residues; sequence PPGPLGCPGSPGPPGPPGPPGC. Residues 551–560 are compositionally biased toward low complexity; the sequence is NPGDPGLRGL. Pro residues-rich tracts occupy residues 596–617 and 654–665; these read PPGP…PPGY and LGPPGPPGPPGQ. Residues 666 to 684 show a composition bias toward low complexity; the sequence is AGPRGLPGLPGPVGKCDPG. The segment covering 778–787 has biased composition (gly residues); the sequence is GTPGRGGLDG. Positions 830-832 match the Cell attachment site motif; sequence RGD. Low complexity predominate over residues 861–876; it reads CPGEMGPPGQKGYPGA. A compositionally biased stretch (basic and acidic residues) spans 922 to 939; sequence KGEKGRPGAKGERGEKGK. The segment covering 970–985 has biased composition (low complexity); that stretch reads RGNPGLPGPKGLEGLP. The Cell attachment site motif lies at 994-996; that stretch reads RGD. Low complexity predominate over residues 1092 to 1103; that stretch reads SGPAGPDGAPGS. Residues 1128–1146 are compositionally biased toward pro residues; sequence PGPPGSTGPPGPPGLPGLP. Positions 1152-1154 match the Cell attachment site motif; it reads RGD. Residues 1228–1248 are compositionally biased toward low complexity; that stretch reads PGAIIPGPKGDRGLPGLRGNP. Residues 1250 to 1259 show a composition bias toward pro residues; the sequence is EPGPPGPPGP. Positions 1304–1306 match the Cell attachment site motif; sequence RGD. Pro residues predominate over residues 1333-1343; that stretch reads PVGPKGPPGPR. 2 stretches are compositionally biased toward low complexity: residues 1366 to 1379 and 1402 to 1429; these read QPGM…LGLP and PAGT…LKGN. An epitope recognized by Goodpasture antibodies region spans residues 1425–1443; it reads GLKGNPGDRGTPATGTRMR. The 225-residue stretch at 1444 to 1668 folds into the Collagen IV NC1 domain; the sequence is GFIFTRHSQT…SRCQVCMKKR (225 aa). Intrachain disulfides connect Cys1459–Cys1550, Cys1492–Cys1547, Cys1504–Cys1510, Cys1569–Cys1664, Cys1603–Cys1661, and Cys1615–Cys1621. Residues 1478–1556 form a required for the anti-angiogenic activity of tumstatin region; it reads NKRAHGQDLG…CTVCEGPAMA (79 aa). An S-Lysyl-methionine sulfilimine (Met-Lys) (interchain with K-1650) cross-link involves residue Met1532. Residues 1609 to 1627 are required for the anti-tumor cell activity of tumstatin; sequence ASPFIECHGRGTCNYYSNS. Lys1650 is covalently cross-linked (S-Lysyl-methionine sulfilimine (Lys-Met) (interchain with M-1532)).

This sequence belongs to the type IV collagen family. There are six type IV collagen isoforms, alpha 1(IV)-alpha 6(IV), each of which can form a triple helix structure with 2 other chains to generate type IV collagen network. The alpha 3(IV) chain forms a triple helical protomer with alpha 4(IV) and alpha 5(IV); this triple helical structure dimerizes through NC1-NC1 domain interactions such that the alpha 3(IV), alpha 4(IV) and alpha 5(IV) chains of one protomer connect with the alpha 5(IV), alpha 4(IV) and alpha 3(IV) chains of the opposite promoter, respectively. Interacts with ITGB3. Associates with LAMB2 at the neuromuscular junction and in GBM. Prolines at the third position of the tripeptide repeating unit (G-X-Y) are hydroxylated in some or all of the chains. Post-translationally, type IV collagens contain numerous cysteine residues which are involved in inter- and intramolecular disulfide bonding. 12 of these, located in the NC1 domain, are conserved in all known type IV collagens. In terms of processing, the trimeric structure of the NC1 domains is stabilized by covalent bonds between Lys and Met residues. Phosphorylated. Thought to be phosphorylated by CERT, but CERT does not have kinase activity. In terms of tissue distribution, highly expressed in kidney and lung. Detected at lower levels in heart, muscle and skin.

Its subcellular location is the secreted. It localises to the extracellular space. The protein resides in the extracellular matrix. The protein localises to the basement membrane. Type IV collagen is the major structural component of glomerular basement membranes (GBM), forming a 'chicken-wire' meshwork together with laminins, proteoglycans and entactin/nidogen. In terms of biological role, tumstatin, a cleavage fragment corresponding to the collagen alpha 3(IV) NC1 domain, possesses both anti-angiogenic and anti-tumor cell activity; these two anti-tumor properties may be regulated via RGD-independent ITGB3-mediated mechanisms. The protein is Collagen alpha-3(IV) chain of Mus musculus (Mouse).